Consider the following 245-residue polypeptide: MQPPRPACQDEGTHGKEVCMLLIQKKRLLVVLIVSFLSILFSAGYAFRIGMLHAHKGSAETILFYGFVAAAFHFILSLYLMLHAHHKKKELLKLADMLRYGGSIGESHFKKFGVLGTQIQFLLKELLALSAQKSLKIAALSGLQRALTELIPTPVIIIDLNGTILDMTKGARKRVQRADKTLTIEHIFPATDSTRAVQEAEKTHTPVEQEGGIVFIPVFSAVGNISHFLVDISKQPASDEPLSLA.

The next 2 membrane-spanning stretches (helical) occupy residues L29–M51 and T61–H83.

The protein localises to the cell membrane. This is an uncharacterized protein from Treponema pallidum (strain Nichols).